Reading from the N-terminus, the 123-residue chain is Large ribosomal subunit protein bL12 (123 aa).

It belongs to the bacterial ribosomal protein bL12 family. In terms of assembly, homodimer. Part of the ribosomal stalk of the 50S ribosomal subunit. Forms a multimeric L10(L12)X complex, where L10 forms an elongated spine to which 2 to 4 L12 dimers bind in a sequential fashion. Binds GTP-bound translation factors.

Forms part of the ribosomal stalk which helps the ribosome interact with GTP-bound translation factors. Is thus essential for accurate translation. This chain is Large ribosomal subunit protein bL12, found in Shewanella amazonensis (strain ATCC BAA-1098 / SB2B).